The following is a 159-amino-acid chain: MIAIYPGSFDPITLGHLDIIERGSGLFEQIIVAVLCNPSKQPLFSVEKRLEQIRHCTQHLTNVTVDSFNGLTVDYAKQKQATVLLRGLRVLSDFEKELQMAHTNQTLWDGVETVFLATAKEYSFLSSSIVKEIAKFGGSVDHLVPPSILADICSSYPSP.

Residue serine 8 participates in substrate binding. ATP-binding positions include 8–9 (SF) and histidine 16. Positions 40, 72, and 86 each coordinate substrate. Residues 87 to 89 (GLR), glutamate 97, and 122 to 128 (YSFLSSS) each bind ATP.

It belongs to the bacterial CoaD family. Homohexamer. Mg(2+) serves as cofactor.

It localises to the cytoplasm. The catalysed reaction is (R)-4'-phosphopantetheine + ATP + H(+) = 3'-dephospho-CoA + diphosphate. It participates in cofactor biosynthesis; coenzyme A biosynthesis; CoA from (R)-pantothenate: step 4/5. Its function is as follows. Reversibly transfers an adenylyl group from ATP to 4'-phosphopantetheine, yielding dephospho-CoA (dPCoA) and pyrophosphate. The sequence is that of Phosphopantetheine adenylyltransferase from Synechocystis sp. (strain ATCC 27184 / PCC 6803 / Kazusa).